We begin with the raw amino-acid sequence, 548 residues long: Multidrug efflux system permease protein Rv1217c (548 aa).

12 helical membrane-spanning segments follow: residues 39-59 (VSLP…YIAS), 99-119 (GIWK…LTVI), 148-168 (ALLL…LGLL), 178-198 (VAFG…AAVA), 210-230 (AVAF…DAGS), 253-273 (WWVL…AYRL), 313-333 (LLWT…VHGI), 359-379 (AFLA…AVSL), 410-430 (LAMA…AAGL), 450-470 (AAVQ…LFGL), 477-497 (VAWG…LAGF), and 521-541 (VPLL…AMAF).

In terms of assembly, the complex is probably composed of two ATP-binding proteins (Rv1218c) and a transmembrane protein (Rv1217c).

It localises to the cell inner membrane. Probably part of the ABC transporter complex Rv1217c-Rv1218c involved in the resistance to a wide range of structurally unrelated drugs. Probably responsible for the translocation of the substrate across the membrane. In Mycobacterium tuberculosis (strain ATCC 25618 / H37Rv), this protein is Multidrug efflux system permease protein Rv1217c.